The primary structure comprises 934 residues: Bifunctional uridylyltransferase/uridylyl-removing enzyme (934 aa).

Residues 1-379 are uridylyltransferase; the sequence is MSAHDLKLEE…TFSRRKRKLS (379 aa). The tract at residues 380 to 736 is uridylyl-removing; the sequence is DDGAFISENH…AKPHAFEAVT (357 aa). The HD domain occupies 496-613; that stretch reads VDEHLLRCIA…IDFADTVQTM (118 aa). ACT domains are found at residues 737–818 and 848–931; these read EITV…DMLA and VIEV…RSPQ.

It belongs to the GlnD family. Mg(2+) is required as a cofactor.

It catalyses the reaction [protein-PII]-L-tyrosine + UTP = [protein-PII]-uridylyl-L-tyrosine + diphosphate. The enzyme catalyses [protein-PII]-uridylyl-L-tyrosine + H2O = [protein-PII]-L-tyrosine + UMP + H(+). Uridylyltransferase (UTase) activity is inhibited by glutamine, while glutamine activates uridylyl-removing (UR) activity. In terms of biological role, modifies, by uridylylation and deuridylylation, the PII regulatory proteins (GlnB and homologs), in response to the nitrogen status of the cell that GlnD senses through the glutamine level. Under low glutamine levels, catalyzes the conversion of the PII proteins and UTP to PII-UMP and PPi, while under higher glutamine levels, GlnD hydrolyzes PII-UMP to PII and UMP (deuridylylation). Thus, controls uridylylation state and activity of the PII proteins, and plays an important role in the regulation of nitrogen assimilation and metabolism. This Brucella melitensis biotype 2 (strain ATCC 23457) protein is Bifunctional uridylyltransferase/uridylyl-removing enzyme.